The sequence spans 113 residues: MGSSAFEVLTFFLKDYKANTPQKLKIIDAYLLYILLTGINQFLYCCLVGTFPFNSFLSGFISCVASFVLGVCLRLQVNPQNSSNFCGIPPERAFADFIFAHVVLHLVVMNFIG.

Residues 1–30 (MGSSAFEVLTFFLKDYKANTPQKLKIIDAY) lie on the Cytoplasmic side of the membrane. The chain crosses the membrane as a helical span at residues 31–51 (LLYILLTGINQFLYCCLVGTF). Residue Pro52 is a topological domain, lumenal. A helical membrane pass occupies residues 53–73 (FNSFLSGFISCVASFVLGVCL). Residues 74–92 (RLQVNPQNSSNFCGIPPER) are Cytoplasmic-facing. A helical transmembrane segment spans residues 93–113 (AFADFIFAHVVLHLVVMNFIG).

It belongs to the DAD/OST2 family. As to quaternary structure, component of the oligosaccharyltransferase (OST) complex. In terms of tissue distribution, widely expressed. Greatest expression seen in the epidermis, intermediate expression in the fat body and midgut and mild expression observed in the silk gland.

The protein localises to the endoplasmic reticulum membrane. The protein operates within protein modification; protein glycosylation. Subunit of the oligosaccharyl transferase (OST) complex that catalyzes the initial transfer of a defined glycan (Glc(3)Man(9)GlcNAc(2) in eukaryotes) from the lipid carrier dolichol-pyrophosphate to an asparagine residue within an Asn-X-Ser/Thr consensus motif in nascent polypeptide chains, the first step in protein N-glycosylation. N-glycosylation occurs cotranslationally and the complex associates with the Sec61 complex at the channel-forming translocon complex that mediates protein translocation across the endoplasmic reticulum (ER). All subunits are required for a maximal enzyme activity. The chain is Dolichyl-diphosphooligosaccharide--protein glycosyltransferase subunit DAD1 from Araneus ventricosus (Orbweaver spider).